A 557-amino-acid polypeptide reads, in one-letter code: Inositol-3-phosphate synthase 1 (557 aa).

NAD(+)-binding residues include Gly67, Gly68, Asn69, Asn70, Asp141, Ser177, Val178, Gln188, Arg191, Thr228, Ala229, Asn230, Thr231, Gly278, Ser279, Asp303, Ser306, Asn337, Asn338, Asp339, and Lys352. Ser279 is modified (phosphoserine). Residue Ser357 is modified to Phosphoserine. The NAD(+) site is built by Gly390, Asp391, Asp419, and Ser420. Positions Gly512–Ala557 are disordered. Residue Ser524 is modified to Phosphoserine.

The protein belongs to the myo-inositol 1-phosphate synthase family. It depends on NAD(+) as a cofactor. In terms of tissue distribution, in testis, it is expressed in Sertoli cells. Highly expressed in 2 types of germ cells, pachytene spermatocytes and round spermatids.

Its subcellular location is the cytoplasm. The catalysed reaction is D-glucose 6-phosphate = 1D-myo-inositol 3-phosphate. It participates in polyol metabolism; myo-inositol biosynthesis; myo-inositol from D-glucose 6-phosphate: step 1/2. Key enzyme in myo-inositol biosynthesis pathway that catalyzes the conversion of glucose 6-phosphate to 1-myo-inositol 1-phosphate in a NAD-dependent manner. Rate-limiting enzyme in the synthesis of all inositol-containing compounds. The protein is Inositol-3-phosphate synthase 1 (Isyna1) of Mus musculus (Mouse).